The primary structure comprises 207 residues: MLELLVASLSLALAFFALLDGWYLVRVPCAVLRARLLQPRVRDLLAEQRYAGRVLPSDLDLLLHMNNARYLREADVARAAHLTRCGVLGALRDLNAHTVLAASCARYRRSLRLFEPFEVHTRLQGWDDRAFYLEARFVSLRDGFVCALLRFRQHVLGTSPDRVVQHLCKRRVEPPELPEDLKHWISYNETSSQLLRAESGLSDRKDQ.

Residues 1-21 (MLELLVASLSLALAFFALLDG) form the signal peptide. N-linked (GlcNAc...) asparagine glycosylation is present at N188. The residue at position 199 (S199) is a Phosphoserine.

It belongs to the THEM6 family.

It localises to the secreted. The protein is Protein THEM6 (Them6) of Mus musculus (Mouse).